The primary structure comprises 275 residues: Voltage-dependent calcium channel gamma-5 subunit (275 aa).

4 helical membrane-spanning segments follow: residues 8–28 (ALTL…GIAV), 103–123 (FPLV…IGHI), 129–149 (ILAF…VVGL), and 176–196 (GWSF…GVMS).

Belongs to the PMP-22/EMP/MP20 family. CACNG subfamily. As to quaternary structure, the L-type calcium channel is composed of five subunits: alpha-1, alpha-2/delta, beta and gamma. Acts as an auxiliary subunit for AMPA-selective glutamate receptors (AMPARs). Found in a complex with GRIA1, GRIA2, GRIA3, GRIA4, CNIH2, CNIH3, CACNG2, CACNG3, CACNG4, CACNG7 and CACNG8. Interacts with GRIA1, GRIA2, GRIA3 and GRIA4.

The protein localises to the membrane. The protein resides in the postsynaptic density membrane. Functionally, regulates the gating properties of AMPA-selective glutamate receptors (AMPARs). Modulates their gating properties by accelerating their rates of activation, deactivation and desensitization. Displays subunit-specific AMPA receptor regulation. Shows specificity for GRIA1, GRIA4 and the long isoform of GRIA2. Thought to stabilize the calcium channel in an inactivated (closed) state. The protein is Voltage-dependent calcium channel gamma-5 subunit (CACNG5) of Homo sapiens (Human).